Consider the following 397-residue polypeptide: 42.8 kDa protein in whiE locus (397 aa).

Residues 1 to 22 form a disordered region; it reads MTVSPVVATDAPSTDATRTTAT. Residues 8-22 are compositionally biased toward low complexity; the sequence is ATDAPSTDATRTTAT. The ABM domain maps to 46 to 137; that stretch reads VRVVLMLDVH…DTHSLRYSVL (92 aa).

This sequence belongs to the SchA/CurD family.

In Streptomyces coelicolor (strain ATCC BAA-471 / A3(2) / M145), this protein is 42.8 kDa protein in whiE locus.